The chain runs to 947 residues: Valine--tRNA ligase (947 aa).

The 'HIGH' region motif lies at 45–55 (PNVTGSLHMGH). The 'KMSKS' region signature appears at 591–595 (KMSKS). K594 contributes to the ATP binding site. Positions 879-943 (DLAAEQARLE…ASLRTALTRV (65 aa)) form a coiled coil.

Belongs to the class-I aminoacyl-tRNA synthetase family. ValS type 1 subfamily. Monomer.

The protein resides in the cytoplasm. It catalyses the reaction tRNA(Val) + L-valine + ATP = L-valyl-tRNA(Val) + AMP + diphosphate. Catalyzes the attachment of valine to tRNA(Val). As ValRS can inadvertently accommodate and process structurally similar amino acids such as threonine, to avoid such errors, it has a 'posttransfer' editing activity that hydrolyzes mischarged Thr-tRNA(Val) in a tRNA-dependent manner. The protein is Valine--tRNA ligase of Agrobacterium fabrum (strain C58 / ATCC 33970) (Agrobacterium tumefaciens (strain C58)).